We begin with the raw amino-acid sequence, 367 residues long: Quinolinate synthase (367 aa).

His45 and Ser62 together coordinate iminosuccinate. Cys109 contacts [4Fe-4S] cluster. Iminosuccinate is bound by residues 140–142 and Ser161; that span reads YVN. Cys229 serves as a coordination point for [4Fe-4S] cluster. Iminosuccinate-binding positions include 255–257 and Thr272; that span reads HPE. Cys319 provides a ligand contact to [4Fe-4S] cluster.

Belongs to the quinolinate synthase family. Type 3 subfamily. The cofactor is [4Fe-4S] cluster.

The protein localises to the cytoplasm. The enzyme catalyses iminosuccinate + dihydroxyacetone phosphate = quinolinate + phosphate + 2 H2O + H(+). Its pathway is cofactor biosynthesis; NAD(+) biosynthesis; quinolinate from iminoaspartate: step 1/1. Catalyzes the condensation of iminoaspartate with dihydroxyacetone phosphate to form quinolinate. The chain is Quinolinate synthase from Geobacillus kaustophilus (strain HTA426).